Consider the following 383-residue polypeptide: tRNA pseudouridine synthase B (383 aa).

Catalysis depends on aspartate 53, which acts as the Nucleophile.

Belongs to the pseudouridine synthase TruB family. Type 1 subfamily.

It carries out the reaction uridine(55) in tRNA = pseudouridine(55) in tRNA. Functionally, responsible for synthesis of pseudouridine from uracil-55 in the psi GC loop of transfer RNAs. This chain is tRNA pseudouridine synthase B, found in Tropheryma whipplei (strain TW08/27) (Whipple's bacillus).